A 273-amino-acid polypeptide reads, in one-letter code: F-actin-capping protein subunit alpha (273 aa).

This sequence belongs to the F-actin-capping protein alpha subunit family. In terms of assembly, heterodimer of an alpha and a beta subunit.

The protein localises to the cytoplasm. Its subcellular location is the cytoskeleton. F-actin-capping proteins bind in a Ca(2+)-independent manner to the fast growing ends of actin filaments (barbed end) thereby blocking the exchange of subunits at these ends. Unlike other capping proteins (such as gelsolin and severin), these proteins do not sever actin filaments. The chain is F-actin-capping protein subunit alpha (cap1) from Emericella nidulans (strain FGSC A4 / ATCC 38163 / CBS 112.46 / NRRL 194 / M139) (Aspergillus nidulans).